The chain runs to 468 residues: UDP-N-acetylmuramate--L-alanine ligase (468 aa).

116 to 122 is an ATP binding site; it reads GTHGKTT.

It belongs to the MurCDEF family.

It is found in the cytoplasm. It catalyses the reaction UDP-N-acetyl-alpha-D-muramate + L-alanine + ATP = UDP-N-acetyl-alpha-D-muramoyl-L-alanine + ADP + phosphate + H(+). Its pathway is cell wall biogenesis; peptidoglycan biosynthesis. Functionally, cell wall formation. In Fusobacterium nucleatum subsp. nucleatum (strain ATCC 25586 / DSM 15643 / BCRC 10681 / CIP 101130 / JCM 8532 / KCTC 2640 / LMG 13131 / VPI 4355), this protein is UDP-N-acetylmuramate--L-alanine ligase.